Reading from the N-terminus, the 352-residue chain is Glycerol-3-phosphate dehydrogenase [NAD(P)+] (352 aa).

NADPH contacts are provided by W11, R37, and K112. 3 residues coordinate sn-glycerol 3-phosphate: K112, G153, and S155. Residue A157 coordinates NADPH. Residues K208, D261, S271, R272, and N273 each contribute to the sn-glycerol 3-phosphate site. The active-site Proton acceptor is K208. An NADPH-binding site is contributed by R272. NADPH contacts are provided by V296 and E298.

It belongs to the NAD-dependent glycerol-3-phosphate dehydrogenase family.

It localises to the cytoplasm. It carries out the reaction sn-glycerol 3-phosphate + NAD(+) = dihydroxyacetone phosphate + NADH + H(+). It catalyses the reaction sn-glycerol 3-phosphate + NADP(+) = dihydroxyacetone phosphate + NADPH + H(+). The protein operates within membrane lipid metabolism; glycerophospholipid metabolism. In terms of biological role, catalyzes the reduction of the glycolytic intermediate dihydroxyacetone phosphate (DHAP) to sn-glycerol 3-phosphate (G3P), the key precursor for phospholipid synthesis. This chain is Glycerol-3-phosphate dehydrogenase [NAD(P)+], found in Polaromonas naphthalenivorans (strain CJ2).